A 518-amino-acid polypeptide reads, in one-letter code: Putative succinate-semialdehyde dehydrogenase [NADP(+)] 2 (518 aa).

NADP(+)-binding positions include 157–158, 181–184, and 232–233; these read WN, KPDS, and GS. The active-site Proton acceptor is the glutamate 254. Residue leucine 255 participates in NADP(+) binding. Cysteine 288 (nucleophile) is an active-site residue. Position 386 (glutamate 386) interacts with NADP(+).

The protein belongs to the aldehyde dehydrogenase family.

The enzyme catalyses succinate semialdehyde + NADP(+) + H2O = succinate + NADPH + 2 H(+). Its function is as follows. Catalyzes the NADP(+)-dependent oxidation of succinate semialdehyde to succinate. Although it has succinate semialdehyde dehydrogenase activity, is likely to act physiologically on a different aldehyde(s). This Mycobacterium bovis (strain ATCC BAA-935 / AF2122/97) protein is Putative succinate-semialdehyde dehydrogenase [NADP(+)] 2 (gabD2).